The sequence spans 346 residues: 3-dehydroquinate synthase (346 aa).

NAD(+) contacts are provided by residues 62 to 67 (DGEQYK), 96 to 100 (GVISD), 120 to 121 (TT), lysine 133, and lysine 142. Zn(2+) contacts are provided by glutamate 175, histidine 234, and histidine 251.

This sequence belongs to the sugar phosphate cyclases superfamily. Dehydroquinate synthase family. Co(2+) serves as cofactor. Zn(2+) is required as a cofactor. The cofactor is NAD(+).

It is found in the cytoplasm. The catalysed reaction is 7-phospho-2-dehydro-3-deoxy-D-arabino-heptonate = 3-dehydroquinate + phosphate. It participates in metabolic intermediate biosynthesis; chorismate biosynthesis; chorismate from D-erythrose 4-phosphate and phosphoenolpyruvate: step 2/7. Catalyzes the conversion of 3-deoxy-D-arabino-heptulosonate 7-phosphate (DAHP) to dehydroquinate (DHQ). This is 3-dehydroquinate synthase from Campylobacter fetus subsp. fetus (strain 82-40).